Here is a 360-residue protein sequence, read N- to C-terminus: Thioredoxin domain-containing protein 15 (360 aa).

Positions 1 to 32 (MVPAAGRRPPRVMRLLGWWQVLLWVLGLPVRG) are cleaved as a signal peptide. The Extracellular portion of the chain corresponds to 33–321 (VEVAEESGRL…GPLPSTLIKS (289 aa)). Residues 141 to 173 (PDREEEYYTEPEVAESDAAPTEDSNNTESLKSP) form a disordered region. Over residues 143 to 155 (REEEYYTEPEVAE) the composition is skewed to acidic residues. The Thioredoxin domain maps to 153-296 (VAESDAAPTE…LKIFIFNQTG (144 aa)). N-linked (GlcNAc...) asparagine glycans are attached at residues N187, N194, N206, and N293. Residues 322–342 (VDWLLVFSLFFLISFIMYATI) form a helical membrane-spanning segment. Over 343-360 (RTESIRWLIPGQEQEHVE) the chain is Cytoplasmic.

It localises to the cell projection. The protein resides in the cilium membrane. Functionally, acts as a positive regulator of ciliary hedgehog signaling. Involved in ciliogenesis. The protein is Thioredoxin domain-containing protein 15 (TXNDC15) of Homo sapiens (Human).